The following is a 684-amino-acid chain: Fermitin family homolog 2 (684 aa).

An interaction with membranes containing phosphatidylinositol phosphate region spans residues 40–81 (HIGGVMLKLVEKLDVKKDWSDHALWWEKKKTWLLKTHWTLDK). Positions 141 to 163 (LRKPRDPKKKKKKLEDAEEETLE) are disordered. Residues 279 to 577 (DLNPKYDAIR…SLPEFGITHF (299 aa)) form the FERM domain. The PH domain maps to 378 to 474 (KVFKPKKLTL…WMAACRLASK (97 aa)). Lysine 381 lines the a 1,2-diacyl-sn-glycero-3-phospho-(1D-myo-inositol-3,4,5-trisphosphate) pocket.

Belongs to the kindlin family.

The protein resides in the cytoplasm. Its subcellular location is the cell cortex. It localises to the cytoskeleton. The protein localises to the stress fiber. It is found in the cell junction. The protein resides in the focal adhesion. Its subcellular location is the membrane. It localises to the cell projection. The protein localises to the lamellipodium membrane. It is found in the nucleus. The protein resides in the myofibril. Its subcellular location is the sarcomere. It localises to the i band. The protein localises to the cell surface. Its function is as follows. Scaffolding protein that enhances integrin activation mediated by TLN1 and/or TLN2, but activates integrins only weakly by itself. Binds to membranes enriched in phosphoinositides. Enhances integrin-mediated cell adhesion onto the extracellular matrix and cell spreading; this requires both its ability to interact with integrins and with phospholipid membranes. Required for the assembly of focal adhesions. Participates in the connection between extracellular matrix adhesion sites and the actin cytoskeleton and also in the orchestration of actin assembly and cell shape modulation. Plays a role in the TGFB1 and integrin signaling pathways. Stabilizes active CTNNB1 and plays a role in the regulation of transcription mediated by CTNNB1 and TCF7L2/TCF4 and in Wnt signaling. Required for normal embryonic development, including normal heart morphogenesis and normal angiogenesis. The chain is Fermitin family homolog 2 (fermt2) from Danio rerio (Zebrafish).